A 711-amino-acid polypeptide reads, in one-letter code: Polyribonucleotide nucleotidyltransferase (711 aa).

Positions 486 and 492 each coordinate Mg(2+). One can recognise a KH domain in the interval 553–612 (PRIHTIKINPDKIKDVIGKGGSVIRALTEETGTTIEIEDDGTVKIAATDGEKAKHAIRRI). Residues 622 to 690 (GRVYTGKVTR…RQGRIRLSIK (69 aa)) form the S1 motif domain. Residues 690 to 711 (KEATEQSQPAAAPEAPAAEQGE) are disordered. Positions 694 to 711 (EQSQPAAAPEAPAAEQGE) are enriched in low complexity.

This sequence belongs to the polyribonucleotide nucleotidyltransferase family. Component of the RNA degradosome, which is a multiprotein complex involved in RNA processing and mRNA degradation. It depends on Mg(2+) as a cofactor.

The protein resides in the cytoplasm. It catalyses the reaction RNA(n+1) + phosphate = RNA(n) + a ribonucleoside 5'-diphosphate. Involved in mRNA degradation. Catalyzes the phosphorolysis of single-stranded polyribonucleotides processively in the 3'- to 5'-direction. The sequence is that of Polyribonucleotide nucleotidyltransferase from Shigella dysenteriae serotype 1 (strain Sd197).